The sequence spans 756 residues: Anaphase-promoting complex subunit 5 (756 aa).

TPR repeat units lie at residues 301 to 334 (RYAA…AQES), 522 to 555 (DGRY…KAQN), 581 to 614 (ISVL…SREY), and 678 to 711 (YSQQ…EQLR).

It belongs to the APC5 family. The APC/C is composed of at least 12 subunits.

It is found in the nucleus. The protein resides in the cytoplasm. The protein localises to the cytoskeleton. Its subcellular location is the spindle. It functions in the pathway protein modification; protein ubiquitination. Its function is as follows. Component of the anaphase promoting complex/cyclosome (APC/C), a cell cycle-regulated E3 ubiquitin ligase that controls progression through mitosis and the G1 phase of the cell cycle. The APC/C complex acts by mediating ubiquitination and subsequent degradation of target proteins: it mainly mediates the formation of 'Lys-11'-linked polyubiquitin chains and, to a lower extent, the formation of 'Lys-48'- and 'Lys-63'-linked polyubiquitin chains. The APC/C complex catalyzes assembly of branched 'Lys-11'-/'Lys-48'-linked branched ubiquitin chains on target proteins. The protein is Anaphase-promoting complex subunit 5 (ANAPC5) of Gallus gallus (Chicken).